The chain runs to 491 residues: UDP-N-acetylmuramate--L-alanine ligase (491 aa).

Residue 126-132 (GTHGKTT) participates in ATP binding.

This sequence belongs to the MurCDEF family.

The protein localises to the cytoplasm. It carries out the reaction UDP-N-acetyl-alpha-D-muramate + L-alanine + ATP = UDP-N-acetyl-alpha-D-muramoyl-L-alanine + ADP + phosphate + H(+). The protein operates within cell wall biogenesis; peptidoglycan biosynthesis. Its function is as follows. Cell wall formation. The sequence is that of UDP-N-acetylmuramate--L-alanine ligase from Photorhabdus laumondii subsp. laumondii (strain DSM 15139 / CIP 105565 / TT01) (Photorhabdus luminescens subsp. laumondii).